Reading from the N-terminus, the 299-residue chain is Oxygen-dependent coproporphyrinogen-III oxidase (299 aa).

A substrate-binding site is contributed by Ser92. A divalent metal cation-binding residues include His96 and His106. His106 (proton donor) is an active-site residue. Residue 108 to 110 coordinates substrate; the sequence is NVR. A divalent metal cation-binding residues include His145 and His175. The interval 240-275 is important for dimerization; that stretch reads YVEFNLVWDRGTLFGLQTGGRTESILMSMPPLVRWE. 258-260 is a substrate binding site; that stretch reads GGR.

The protein belongs to the aerobic coproporphyrinogen-III oxidase family. Homodimer. It depends on a divalent metal cation as a cofactor.

Its subcellular location is the cytoplasm. It catalyses the reaction coproporphyrinogen III + O2 + 2 H(+) = protoporphyrinogen IX + 2 CO2 + 2 H2O. The protein operates within porphyrin-containing compound metabolism; protoporphyrin-IX biosynthesis; protoporphyrinogen-IX from coproporphyrinogen-III (O2 route): step 1/1. Its function is as follows. Involved in the heme biosynthesis. Catalyzes the aerobic oxidative decarboxylation of propionate groups of rings A and B of coproporphyrinogen-III to yield the vinyl groups in protoporphyrinogen-IX. In Salmonella choleraesuis (strain SC-B67), this protein is Oxygen-dependent coproporphyrinogen-III oxidase.